The sequence spans 625 residues: MEILFRENLARIARFKTPHGEIETPTVMPVINPNLNFLDESTLRSYGVQAVITNSYIIKRNQRLNEDALRHGLHSLIKFSGPIMTDSGTFQSHVYGDIEYSNKEIVDFQKAIGSDIITILDVFTEPDESYNSARSKVIETYKRLKEIDFEDKIIAGPVQGSIYPDLRRLSAYLMSDALYLPIGGVVPLLESYRYSDLVKIIFNSKVSSDFSRPVHLFGGGHPMFFAFAVMLGVDLFDSASYIKYAKDNRLLYSEGTRALNDIREFPEWSPIHGKYTPQELLHEESEKRTRMLALHNLKSIFIEINEIKERIYENTLYNYVEEKARSHPALFKAFMSMINYDTSDYSPLSYKSPFFYYDKTSLNHPIIKRIMKFTENYISNSRHTLIISSKYWRPGVKNENVIKNIVECTDFNLLVSWNGIYIPLFLEDSYPVQQLVSSGLNDKKLEEDYLKRLKSINNDIEFYEGEHYDKRLRDYDTEKINTIAMFQFNINERFFDKSNIIKSKSTGHIRNIIEDNNIIATMRNDGYLTLSIKGAYRLLSMKPWPGLRVVVDDESGRFNANGYNVFFKFIKSFDTGIIPGNETLVVSEDDDLYAVGKAAVSGIEMYYYKSGVAVKVHEGVNKKAA.

The active-site Nucleophile is Asp-86. Substrate contacts are provided by Asp-121 and Gly-184. The PUA domain maps to 546–621 (GLRVVVDDES…VAVKVHEGVN (76 aa)).

The protein belongs to the archaeosine tRNA-ribosyltransferase family. The cofactor is Zn(2+).

The enzyme catalyses guanosine(15) in tRNA + 7-cyano-7-deazaguanine = 7-cyano-7-carbaguanosine(15) in tRNA + guanine. Its pathway is tRNA modification; archaeosine-tRNA biosynthesis. Exchanges the guanine residue with 7-cyano-7-deazaguanine (preQ0) at position 15 in the dihydrouridine loop (D-loop) of archaeal tRNAs. In Picrophilus torridus (strain ATCC 700027 / DSM 9790 / JCM 10055 / NBRC 100828 / KAW 2/3), this protein is tRNA-guanine(15) transglycosylase.